We begin with the raw amino-acid sequence, 812 residues long: cAMP-regulated phosphoprotein 21 (812 aa).

The tract at residues 1-130 (MSEQGDLNQA…KDKTSEKPKI (130 aa)) is disordered. Position 2 is an N-acetylserine (S2). Over residues 9–25 (QAIAEEGGTEQETATPE) the composition is skewed to low complexity. Positions 32 to 58 (ESLDEEEKLELQRRLEAQNQERRKSKS) form a coiled coil. A Phosphoserine modification is found at S33. Over residues 40–53 (LELQRRLEAQNQER) the composition is skewed to basic and acidic residues. The residue at position 56 (S56) is a Phosphoserine. The span at 90-100 (IHLQLSSFSSL) shows a compositional bias: low complexity. The segment covering 102-130 (EEDKSRKDDSEREKEKDKNKDKTSEKPKI) has biased composition (basic and acidic residues). S134 carries the phosphoserine modification. Positions 164-227 (RMILLKMEQE…SVIINKTSST (64 aa)) constitute an R3H domain. Residues 228-300 (RIPEQRFCEH…VRERIFAHDS (73 aa)) form the SUZ domain. The tract at residues 246–281 (SQKRFILKRDNSSIDKEDNQQNRMHPFRDDRRSKSI) is disordered. Phosphoserine is present on S300. Disordered stretches follow at residues 332 to 436 (RGNR…PLVS), 485 to 544 (HTGQ…MAGP), and 561 to 632 (LSRQ…QQPP). The segment covering 339 to 349 (GRTSGSRQSSS) has biased composition (low complexity). Basic and acidic residues predominate over residues 351–360 (NELKWSDHQR). Residues 361-373 (AWSSTDSDSSNRN) show a composition bias toward polar residues. A phosphoserine mark is found at S363 and S383. Residues 391–423 (TRGDSTSSTRSTGKLSKAGSESSSSAGSSGSLS) show a composition bias toward low complexity. S562 bears the Phosphoserine mark. The span at 582 to 602 (LMPQPAQQPSYVIASTGQQLP) shows a compositional bias: polar residues. Positions 619 to 632 (QPPPSPQGFVQQPP) are enriched in pro residues. R655 is modified (asymmetric dimethylarginine).

As to quaternary structure, interacts with CALM1. Post-translationally, phosphorylation at Ser-56 favors interaction with CALM1. Isoform 1 is methylated by CARM1 at Arg-655 in immature thymocytes. As to expression, isoform 2 is expressed in brain. Isoform 1 is present in immature thymocytes (at protein level).

It is found in the cytoplasm. Functionally, isoform 2 may act as a competitive inhibitor of calmodulin-dependent enzymes such as calcineurin in neurons. This Homo sapiens (Human) protein is cAMP-regulated phosphoprotein 21 (ARPP21).